The following is a 185-amino-acid chain: Ribosome-recycling factor (185 aa).

The protein belongs to the RRF family.

The protein localises to the cytoplasm. In terms of biological role, responsible for the release of ribosomes from messenger RNA at the termination of protein biosynthesis. May increase the efficiency of translation by recycling ribosomes from one round of translation to another. The protein is Ribosome-recycling factor of Wolbachia sp. subsp. Drosophila simulans (strain wRi).